The sequence spans 128 residues: Large ribosomal subunit protein bL12 (128 aa).

Belongs to the bacterial ribosomal protein bL12 family. Homodimer. Part of the ribosomal stalk of the 50S ribosomal subunit. Forms a multimeric L10(L12)X complex, where L10 forms an elongated spine to which 2 to 4 L12 dimers bind in a sequential fashion. Binds GTP-bound translation factors.

Forms part of the ribosomal stalk which helps the ribosome interact with GTP-bound translation factors. Is thus essential for accurate translation. This chain is Large ribosomal subunit protein bL12, found in Kosmotoga olearia (strain ATCC BAA-1733 / DSM 21960 / TBF 19.5.1).